The chain runs to 233 residues: Orotidine 5'-phosphate decarboxylase (233 aa).

Residues Asp-11, Lys-33, Asp-60–Thr-69, Thr-120, Arg-181, Gln-190, Gly-210, and Arg-211 each bind substrate. Lys-62 serves as the catalytic Proton donor.

The protein belongs to the OMP decarboxylase family. Type 1 subfamily. As to quaternary structure, homodimer.

The catalysed reaction is orotidine 5'-phosphate + H(+) = UMP + CO2. It participates in pyrimidine metabolism; UMP biosynthesis via de novo pathway; UMP from orotate: step 2/2. Its function is as follows. Catalyzes the decarboxylation of orotidine 5'-monophosphate (OMP) to uridine 5'-monophosphate (UMP). This Vibrio parahaemolyticus serotype O3:K6 (strain RIMD 2210633) protein is Orotidine 5'-phosphate decarboxylase.